The following is a 753-amino-acid chain: MLRFFILFSLFLHSSVAAPKTPAAAAAVPAKKWLTLNGQEPAVVARGGFSGLFPESSISANDLAIGTSSPGFTMLCNLQMTKDGVGLCLSDIRLDNATTISSVFPKAQKTYKVNGQDLKGWFVIDYDADTIFNKVTLVQNIFSRPSIFDGQMSVSAVEDVLGTKPPKFWLSVQYDAFYMEHKLSPAEYLRSLRFRGINVISSPEIGFLKSIGMDAGRAKTKLIFEFKDPEAVEPTTNKKYSEIQQNLAAIKAFASGVLVPKDYIWPIDSAKYLKPATTFVADAHKAGLEVYASGFANDLRTSFNYSYDPSAEYLQFVDNGQFSVDGVITDFPPTASQSITCFSHQNGNLPKAGHALVITHNGASGDYPGCTDLAYQKAIDDGADIIDCSVQMSKDGIAFCHDAADLSASTTARTTFMSRATSVPEIQPTNGIFSFDLTWAEIQSVKPQIENPFTATGFQRNPANKNAGKFTTLADFLELGKAKAVTGVLINIQNAAYLASKKGLGVVDVVKSALTNSTLDKQSTQKVLIQSDDSSVLSSFEAVPPYTRVLSIDKEIGDAPKTSIEEIKKHADAVNLLRTSLITVSQSFATGKTNVVEEMHKANISVYVSVLRNEYIAIAFDYFSDPTIELATFIAGRGVDGVITEFPATATRYLRSPCSDLNKDQPYAILPADAGALLTVADKEAQLPAIPPNPPLDAKDVIDPPLPPVAKLASNGTEGGPPQTPPRSGTVAIAANLSLSLLAMMALGLLYTA.

The N-terminal stretch at 1–17 (MLRFFILFSLFLHSSVA) is a signal peptide. 2 consecutive GP-PDE domains span residues 41 to 339 (PAVV…SQSI) and 355 to 654 (ALVI…TRYL). 4 N-linked (GlcNAc...) asparagine glycosylation sites follow: asparagine 304, asparagine 516, asparagine 603, and asparagine 715. The tract at residues 707 to 729 (PPVAKLASNGTEGGPPQTPPRSG) is disordered. The chain crosses the membrane as a helical span at residues 731–751 (VAIAANLSLSLLAMMALGLLY).

Belongs to the glycerophosphoryl diester phosphodiesterase family. In terms of tissue distribution, expressed in flowers and siliques.

It is found in the membrane. The enzyme catalyses a sn-glycero-3-phosphodiester + H2O = an alcohol + sn-glycerol 3-phosphate + H(+). The polypeptide is Glycerophosphodiester phosphodiesterase GDPDL6 (Arabidopsis thaliana (Mouse-ear cress)).